Reading from the N-terminus, the 193-residue chain is Dirigent protein (193 aa).

The signal sequence occupies residues 1-29; sequence MGGEKAFSFIFLLFLCFFLANLSASSAHP. Cysteines 40 and 192 form a disulfide. 2 N-linked (GlcNAc...) asparagine glycosylation sites follow: asparagine 59 and asparagine 129.

This sequence belongs to the plant dirigent protein family. As to quaternary structure, homodimer. Expressed in rhizomes, stems, and leaves.

The protein localises to the secreted. Its subcellular location is the extracellular space. The protein resides in the apoplast. It functions in the pathway aromatic compound metabolism; phenylpropanoid biosynthesis. Functionally, dirigent proteins impart stereoselectivity on the phenoxy radical-coupling reaction, yielding optically active lignans from two molecules of coniferyl alcohol in the biosynthesis of lignans, flavonolignans, and alkaloids and thus plays a central role in plant secondary metabolism. Also involved in the biosynthesis of etoposide, a chemotherapeutic compound of the topoisomerase inhibitor family. This chain is Dirigent protein, found in Sinopodophyllum hexandrum (Himalayan may apple).